Reading from the N-terminus, the 419-residue chain is Capsule polysaccharide modification protein LipB (419 aa).

The protein localises to the cell inner membrane. Involved in the phospholipid modification of the capsular polysaccharide, a strong requirement for its translocation to the cell surface. This chain is Capsule polysaccharide modification protein LipB (lipB), found in Neisseria meningitidis serogroup B (strain ATCC BAA-335 / MC58).